We begin with the raw amino-acid sequence, 357 residues long: mRNA endoribonuclease toxin LS (357 aa).

In terms of assembly, forms homodimer in solution. Forms a complex with cognate antitoxin RnlB and with enterobacteria phage T4 antitoxin Dmd.

The protein localises to the cytoplasm. In terms of biological role, toxic component of a type II toxin-antitoxin (TA) system. A stable (half-life 27.6 minutes) endoribonuclease that in the absence of cognate antitoxin RnlB causes generalized RNA degradation. Degrades late enterobacteria phage T4 mRNAs, protecting the host against T4 reproduction. Activity is inhibited by cognate antitoxin RnlB and by enterobacteria phage T4 protein Dmd. Targets cyaA mRNA. This chain is mRNA endoribonuclease toxin LS (rnlA), found in Escherichia coli (strain K12).